A 240-amino-acid polypeptide reads, in one-letter code: Ribose-5-phosphate isomerase (240 aa).

Substrate is bound by residues 34-37 (SGST), 88-91 (DGAD), and 101-104 (KGGG). Catalysis depends on glutamate 110, which acts as the Proton acceptor. Lysine 128 serves as a coordination point for substrate.

It belongs to the ribose 5-phosphate isomerase family.

The protein resides in the cytoplasm. It catalyses the reaction aldehydo-D-ribose 5-phosphate = D-ribulose 5-phosphate. Its pathway is carbohydrate degradation; pentose phosphate pathway; D-ribose 5-phosphate from D-ribulose 5-phosphate (non-oxidative stage): step 1/1. Involved in the first step of the non-oxidative branch of the pentose phosphate pathway. It catalyzes the reversible conversion of ribose-5-phosphate to ribulose 5-phosphate. The chain is Ribose-5-phosphate isomerase (RKI1) from Candida albicans (strain SC5314 / ATCC MYA-2876) (Yeast).